We begin with the raw amino-acid sequence, 302 residues long: Sulfate adenylyltransferase subunit 2 (302 aa).

This sequence belongs to the PAPS reductase family. CysD subfamily. As to quaternary structure, heterodimer composed of CysD, the smaller subunit, and CysN.

The catalysed reaction is sulfate + ATP + H(+) = adenosine 5'-phosphosulfate + diphosphate. It participates in sulfur metabolism; hydrogen sulfide biosynthesis; sulfite from sulfate: step 1/3. With CysN forms the ATP sulfurylase (ATPS) that catalyzes the adenylation of sulfate producing adenosine 5'-phosphosulfate (APS) and diphosphate, the first enzymatic step in sulfur assimilation pathway. APS synthesis involves the formation of a high-energy phosphoric-sulfuric acid anhydride bond driven by GTP hydrolysis by CysN coupled to ATP hydrolysis by CysD. The sequence is that of Sulfate adenylyltransferase subunit 2 from Salmonella schwarzengrund (strain CVM19633).